The sequence spans 376 residues: Cytochrome-c peroxidase IdrP1 (376 aa).

The signal sequence occupies residues 1 to 24 (MGHIRSIRLALAVAAVCTAASAAA). 2 consecutive Cytochrome c domains span residues 49-157 (DKVA…AAFK) and 203-354 (AEAQ…EALS). Cysteine 71, cysteine 74, histidine 75, cysteine 218, cysteine 221, and histidine 222 together coordinate heme c.

In terms of assembly, the iodate reductase (Idr) complex is composed of a molybdopterin-dependent iodate reductase (IdrA and IdrB subunits) and two associated peroxidases (IdrP1 and IdrP2). The cofactor is heme c.

It is found in the periplasm. It catalyses the reaction 2 Fe(II)-[cytochrome c] + H2O2 + 2 H(+) = 2 Fe(III)-[cytochrome c] + 2 H2O. Involved in iodate respiration. May play a critical role in detoxification of inadvertent H(2)O(2) generated by the iodate reductase IdrA/IdrB. The sequence is that of Cytochrome-c peroxidase IdrP1 from Denitromonas iodatirespirans.